The primary structure comprises 789 residues: Disintegrin and metalloproteinase domain-containing protein 1 (789 aa).

The N-terminal stretch at 1–68 (MSVAASASRS…LLIFLPSTLC (68 aa)) is a signal peptide. One can recognise a Peptidase M12B domain in the interval 238-432 (KYVEMFVVVN…HRGACLLDRP (195 aa)). An N-linked (GlcNAc...) asparagine glycan is attached at Asn259. Cystine bridges form between Cys348–Cys427, Cys388–Cys411, Cys390–Cys396, and Cys497–Cys517. His373 contributes to the Zn(2+) binding site. Glu374 is an active-site residue. The Zn(2+) site is built by His377 and His383. N-linked (GlcNAc...) asparagine glycosylation is present at Asn410. In terms of domain architecture, Disintegrin spans 441 to 525 (DAHCGNGVVE…ECPANSYMQD (85 aa)). An N-linked (GlcNAc...) asparagine glycan is attached at Asn633. Residues 666 to 700 (LQYDCHPQEMCHGNGVCNNFKHCHCDAGFSPPDCS) enclose the EGF-like domain. Disulfide bonds link Cys670–Cys682, Cys676–Cys688, and Cys690–Cys699. Asn720 carries N-linked (GlcNAc...) asparagine glycosylation. A helical transmembrane segment spans residues 743–763 (VVVLVVPIFLIVLLCCLMLIA). Over 764–789 (YLWSEVQEAVSPGSSSTTSSSESESD) the chain is Cytoplasmic.

In terms of assembly, heterodimer with ADAM2/fertilin subunit beta.

It is found in the membrane. Functionally, may be involved in sperm-egg fusion. The sequence is that of Disintegrin and metalloproteinase domain-containing protein 1 (Adam1) from Rattus norvegicus (Rat).